Here is a 114-residue protein sequence, read N- to C-terminus: Iron-sulfur cluster insertion protein ErpA (114 aa).

Iron-sulfur cluster-binding residues include Cys42, Cys106, and Cys108.

It belongs to the HesB/IscA family. In terms of assembly, homodimer. Iron-sulfur cluster is required as a cofactor.

Functionally, required for insertion of 4Fe-4S clusters for at least IspG. The chain is Iron-sulfur cluster insertion protein ErpA from Buchnera aphidicola subsp. Acyrthosiphon pisum (strain 5A).